Consider the following 332-residue polypeptide: Arabinogalactan endo-beta-1,4-galactanase (332 aa).

Residue N111 is glycosylated (N-linked (GlcNAc...) asparagine). The active-site Proton donor is E135. The active-site Nucleophile is E245.

The protein belongs to the glycosyl hydrolase 53 family.

It catalyses the reaction The enzyme specifically hydrolyzes (1-&gt;4)-beta-D-galactosidic linkages in type I arabinogalactans.. This chain is Arabinogalactan endo-beta-1,4-galactanase, found in Thermothelomyces thermophilus (Myceliophthora thermophila).